The following is a 199-amino-acid chain: dTTP/UTP pyrophosphatase (199 aa).

Catalysis depends on D76, which acts as the Proton acceptor.

Belongs to the Maf family. YhdE subfamily. A divalent metal cation serves as cofactor.

The protein resides in the cytoplasm. It carries out the reaction dTTP + H2O = dTMP + diphosphate + H(+). The enzyme catalyses UTP + H2O = UMP + diphosphate + H(+). Functionally, nucleoside triphosphate pyrophosphatase that hydrolyzes dTTP and UTP. May have a dual role in cell division arrest and in preventing the incorporation of modified nucleotides into cellular nucleic acids. In Chlorobaculum parvum (strain DSM 263 / NCIMB 8327) (Chlorobium vibrioforme subsp. thiosulfatophilum), this protein is dTTP/UTP pyrophosphatase.